We begin with the raw amino-acid sequence, 182 residues long: Ribosome-recycling factor (182 aa).

The protein belongs to the RRF family.

Its subcellular location is the cytoplasm. Functionally, responsible for the release of ribosomes from messenger RNA at the termination of protein biosynthesis. May increase the efficiency of translation by recycling ribosomes from one round of translation to another. The sequence is that of Ribosome-recycling factor from Picosynechococcus sp. (strain ATCC 27264 / PCC 7002 / PR-6) (Agmenellum quadruplicatum).